The chain runs to 287 residues: Protease HtpX (287 aa).

The next 2 membrane-spanning stretches (helical) occupy residues 4 to 24 and 33 to 53; these read IFLLIATNLAVLLVASIVMSI and GGLLVFAAIFGFGGAFISLAI. His-139 serves as a coordination point for Zn(2+). Glu-140 is a catalytic residue. Position 143 (His-143) interacts with Zn(2+). 2 helical membrane-spanning segments follow: residues 154–174 and 195–215; these read LIQGVVNTFVIFAARVVAGII and AVVFVLDMLFGILASIIVAYF. Residue Glu-220 participates in Zn(2+) binding.

This sequence belongs to the peptidase M48B family. The cofactor is Zn(2+).

The protein localises to the cell inner membrane. The chain is Protease HtpX from Shewanella sp. (strain ANA-3).